The following is a 319-amino-acid chain: Ornithine carbamoyltransferase (319 aa).

Carbamoyl phosphate is bound by residues 55-58, Gln82, Arg106, and 133-136; these read STRT and HPCQ. L-ornithine-binding positions include Asn171, Asp234, and 238–239; that span reads SM. Carbamoyl phosphate is bound by residues 274–275 and Arg302; that span reads CL.

This sequence belongs to the aspartate/ornithine carbamoyltransferase superfamily. OTCase family.

It is found in the cytoplasm. The catalysed reaction is carbamoyl phosphate + L-ornithine = L-citrulline + phosphate + H(+). It participates in amino-acid biosynthesis; L-arginine biosynthesis; L-arginine from L-ornithine and carbamoyl phosphate: step 1/3. Functionally, reversibly catalyzes the transfer of the carbamoyl group from carbamoyl phosphate (CP) to the N(epsilon) atom of ornithine (ORN) to produce L-citrulline. This Corynebacterium glutamicum (strain ATCC 13032 / DSM 20300 / JCM 1318 / BCRC 11384 / CCUG 27702 / LMG 3730 / NBRC 12168 / NCIMB 10025 / NRRL B-2784 / 534) protein is Ornithine carbamoyltransferase (argF).